A 543-amino-acid polypeptide reads, in one-letter code: Peptide chain release factor 3 (543 aa).

The tr-type G domain occupies 21 to 289 (KKRRTFAIIS…ALSDWAPSPL (269 aa)). GTP contacts are provided by residues 30 to 37 (SHPDAGKT), 98 to 102 (DTPGH), and 152 to 155 (NKLD).

The protein belongs to the TRAFAC class translation factor GTPase superfamily. Classic translation factor GTPase family. PrfC subfamily.

It is found in the cytoplasm. Its function is as follows. Increases the formation of ribosomal termination complexes and stimulates activities of RF-1 and RF-2. It binds guanine nucleotides and has strong preference for UGA stop codons. It may interact directly with the ribosome. The stimulation of RF-1 and RF-2 is significantly reduced by GTP and GDP, but not by GMP. The chain is Peptide chain release factor 3 from Thiobacillus denitrificans (strain ATCC 25259 / T1).